The following is a 462-amino-acid chain: U2 small nuclear ribonucleoprotein auxiliary factor 35 kDa subunit-related protein 2 (462 aa).

Over residues 1–13 the composition is skewed to low complexity; sequence METAGATADATAG. Disordered stretches follow at residues 1 to 22, 44 to 66, and 115 to 138; these read META…RKKY, AELA…EEER, and WEEQ…EREE. Lys49 is covalently cross-linked (Glycyl lysine isopeptide (Lys-Gly) (interchain with G-Cter in SUMO2)). Positions 57-66 are enriched in basic and acidic residues; sequence AEEKRLEEER. The C3H1-type 1 zinc-finger motif lies at 170 to 198; it reads EKDRANCPFYSKTGACRFGDRCSRKHNFP. The RRM domain occupies 202-308; that stretch reads PTLLIKGMFT…RQLQCEFCPV (107 aa). The C3H1-type 2 zinc finger occupies 310–337; sequence RWKMAICGLFEVQQCPRGKHCNFLHVFR. Ser353 carries the phosphoserine modification. Residues 354–462 form a disordered region; the sequence is PDWTSSSFGK…QPQPQPQSDP (109 aa). Residues 364–379 are compositionally biased toward basic and acidic residues; it reads NSERRERASHYDEYYG. At Ser389 the chain carries Phosphoserine. Residues 392 to 403 are compositionally biased toward basic and acidic residues; it reads FYKRNGESDRKS. Residues 404-417 show a composition bias toward basic residues; that stretch reads SSRHRVKKSHRYGM.

As to quaternary structure, component of the U11/U12 snRNPs that are part of the U12-type spliceosome. Interacts (via RS domain) with SRSF1 and SRSF2. Interacts with U2AF2/U2AF65. Phosphorylated in the RS domain by SRPK1.

Its subcellular location is the nucleus. Pre-mRNA-binding protein required for splicing of both U2- and U12-type introns. Selectively interacts with the 3'-splice site of U2- and U12-type pre-mRNAs and promotes different steps in U2 and U12 intron splicing. Recruited to U12 pre-mRNAs in an ATP-dependent manner and is required for assembly of the prespliceosome, a precursor to other spliceosomal complexes. For U2-type introns, it is selectively and specifically required for the second step of splicing. This Mus musculus (Mouse) protein is U2 small nuclear ribonucleoprotein auxiliary factor 35 kDa subunit-related protein 2 (Zrsr2).